Consider the following 172-residue polypeptide: Transcriptional regulator CdrL (172 aa).

Residues 72-113 (SPSAVEEVRTTPASGGRADAEEPGDDGETDAEHADTSATGDE) are disordered. Residues 116–160 (CSQCGAELSADHVYCPNCGGKATHRVFCECGDEIRADWAFCPRCG) form a DZANK-type zinc finger.

The protein belongs to the CdrL family.

The protein resides in the cytoplasm. In terms of biological role, transcriptional regulator involved in the control of cell division. This is Transcriptional regulator CdrL from Halobacterium salinarum (strain ATCC 29341 / DSM 671 / R1).